A 674-amino-acid polypeptide reads, in one-letter code: ATP-dependent DNA helicase Hel308 (674 aa).

ATP contacts are provided by residues Q27 and 44–51 (VPTAAGKT). A Helicase ATP-binding domain is found at 31–197 (IEQFRKGKNI…WLNASLIKSS (167 aa)). The DEAH box signature appears at 142–145 (DEIH). The 188-residue stretch at 224 to 411 (DINLLVKETV…PEKVRFNTLA (188 aa)) folds into the Helicase C-terminal domain.

It belongs to the helicase family. Hel308 subfamily. Monomer.

The catalysed reaction is Couples ATP hydrolysis with the unwinding of duplex DNA by translocating in the 3'-5' direction.. It catalyses the reaction ATP + H2O = ADP + phosphate + H(+). Its function is as follows. DNA-dependent ATPase and 3'-5' DNA helicase that may be involved in repair of stalled replication forks. The polypeptide is ATP-dependent DNA helicase Hel308 (Thermoplasma volcanium (strain ATCC 51530 / DSM 4299 / JCM 9571 / NBRC 15438 / GSS1)).